Here is a 493-residue protein sequence, read N- to C-terminus: Insulinoma-associated protein 2 (493 aa).

The span at 1–12 (MPRGFLVKRTKR) shows a compositional bias: basic residues. An SNAG domain region spans residues 1–20 (MPRGFLVKRTKRSGSSYRAR). The disordered stretch occupies residues 1-77 (MPRGFLVKRT…PGPSPARPAG (77 aa)). Residues 203–223 (FICQLCKHQYADPFALAQHRC) form a C2H2-type 1; atypical zinc finger. A C2H2-type 2 zinc finger spans residues 231-253 (YRCPECDKVFSCPANLASHRRWH). The tract at residues 248 to 310 (SHRRWHKPRP…SGDGQHRDSA (63 aa)) is disordered. Residues 267–276 (PHAPLTPPDP) show a composition bias toward pro residues. A compositionally biased stretch (basic and acidic residues) spans 283–294 (ENGRVPRTDDQH). 3 consecutive C2H2-type zinc fingers follow at residues 354–376 (FVCP…LGTH), 398–420 (FACP…RLWH), and 452–475 (FSCK…NKCH).

Expressed in spleen, stomach, liver, kidney and testis. In the pancreas, expressed in islet cells, including insulin-producing beta-cells, but not in acinar cells (at protein level). In the brain, expressed in the neuronal cells of the cerebral cortex, the Purkinje cells of the cerebellum and the hippocampal region including CA1 and CA3 (at protein level).

Its subcellular location is the cytoplasm. The protein localises to the nucleus. Its function is as follows. May function as a growth suppressor or tumor suppressor in liver cells and in certain neurons. The sequence is that of Insulinoma-associated protein 2 (Insm2) from Mus musculus (Mouse).